We begin with the raw amino-acid sequence, 84 residues long: Small ribosomal subunit protein bS18 (84 aa).

It belongs to the bacterial ribosomal protein bS18 family. As to quaternary structure, part of the 30S ribosomal subunit. Forms a tight heterodimer with protein bS6.

Its function is as follows. Binds as a heterodimer with protein bS6 to the central domain of the 16S rRNA, where it helps stabilize the platform of the 30S subunit. The polypeptide is Small ribosomal subunit protein bS18 (Maricaulis maris (strain MCS10) (Caulobacter maris)).